A 557-amino-acid polypeptide reads, in one-letter code: E3 ubiquitin-protein ligase ARIH1 (557 aa).

A compositionally biased stretch (acidic residues) spans 1 to 47 (MDSDEGYNYEFDEDEECSEEDSGAEEEEDEDDDEPDDDTLDLGEVEL). Positions 1–95 (MDSDEGYNYE…GGGGGPGHEQ (95 aa)) are disordered. The span at 65–92 (ETGGGGGSALGPGGGGGGGGGGGGGGPG) shows a compositional bias: gly residues. Residues 105–153 (TAEQILQHMVECIREVNEVIQNPATITRILLSHFNWDKEKLMERYFDGN) are UBA-like. Lys142 is modified (N6-acetyllysine). The TRIAD supradomain stretch occupies residues 182 to 393 (QDMPCQICYL…SAWYNCNRYN (212 aa)). Zn(2+) contacts are provided by Cys186, Cys189, Cys203, His205, Cys208, Cys211, Cys231, Cys236, Cys276, Cys281, Cys297, Cys299, Cys304, Cys307, His312, Cys317, Cys344, and Cys347. Residues 186 to 236 (CQICYLNYPNSYFTGLECGHKFCMQCWSEYLTTKIMEEGMGQTISCPAHGC) form an RING-type 1 zinc finger. The segment at 256 to 317 (LKYQHLITNS…GENWHDPVKC (62 aa)) adopts an IBR-type zinc-finger fold. The RING-type 2; atypical zinc finger occupies 344 to 375 (CPKCHVTIEKDGGCNHMVCRNQNCKAEFCWVC). The active site involves Cys357. Zn(2+) is bound by residues Cys362, Cys367, Cys372, Cys375, His382, and Cys389. The interval 408–557 (RAALQRYLFY…EKDLWEYIED (150 aa)) is ariadne domain.

Belongs to the RBR family. Ariadne subfamily. In terms of assembly, interacts (via the first RING-type zinc finger) with UBE2L3. Associates with cullin-RING ubiquitin ligase (CRL) complexes containing CUL1, CUL2 and CUL3. Interacts with neddylated CUL1. Interacts with neddylated CUL2. Interacts with neddylated CUL3. Interacts with neddylated CUL4A. Widely expressed.

It is found in the cytoplasm. The protein localises to the nucleus. The protein resides in the cajal body. It carries out the reaction [E2 ubiquitin-conjugating enzyme]-S-ubiquitinyl-L-cysteine + [acceptor protein]-L-lysine = [E2 ubiquitin-conjugating enzyme]-L-cysteine + [acceptor protein]-N(6)-ubiquitinyl-L-lysine.. The protein operates within protein modification; protein ubiquitination. Autoinhibited by the ariadne domain, which masks the second RING-type zinc finger that contains the active site and inhibits the E3 activity. Inhibition is relieved upon binding to neddylated cullin-RING ubiquitin ligase complexes, which activate the E3 ligase activity of ARIH1. Its function is as follows. E3 ubiquitin-protein ligase, which catalyzes ubiquitination of target proteins together with ubiquitin-conjugating enzyme E2 UBE2L3. Acts as an atypical E3 ubiquitin-protein ligase by working together with cullin-RING ubiquitin ligase (CRL) complexes and initiating ubiquitination of CRL substrates: associates with CRL complexes and specifically mediates addition of the first ubiquitin on CRLs targets. The initial ubiquitin is then elongated by CDC34/UBE2R1 and UBE2R2. E3 ubiquitin-protein ligase activity is activated upon binding to neddylated cullin-RING ubiquitin ligase complexes. Plays a role in protein translation in response to DNA damage by mediating ubiquitination of EIF4E2, the consequences of EIF4E2 ubiquitination are however unclear. According to a report, EIF4E2 ubiquitination leads to promote EIF4E2 cap-binding and protein translation arrest. According to another report EIF4E2 ubiquitination leads to its subsequent degradation. Acts as the ligase involved in ISGylation of EIF4E2. In vitro, controls the degradation of the LINC (LInker of Nucleoskeleton and Cytoskeleton) complex member SUN2 and may therefore have a role in the formation and localization of the LINC complex, and as a consequence, nuclear subcellular localization and nuclear morphology. In Homo sapiens (Human), this protein is E3 ubiquitin-protein ligase ARIH1.